The sequence spans 659 residues: UvrABC system protein B (659 aa).

The Helicase ATP-binding domain occupies 25–182 (QSIENGNRGQ…KKLIEIQYER (158 aa)). 38–45 (GVTGSGKT) serves as a coordination point for ATP. A Beta-hairpin motif is present at residues 91 to 114 (YYDYYQPEAYVPQTDTFIEKDASI). Residues 429–582 (QIDDLYGEIQ…QMEYNEEHNI (154 aa)) form the Helicase C-terminal domain. Positions 622-657 (EKLIEQYEEEMKEAAKNLQFERAAELRDIIKDLKEN) constitute a UVR domain.

The protein belongs to the UvrB family. Forms a heterotetramer with UvrA during the search for lesions. Interacts with UvrC in an incision complex.

It is found in the cytoplasm. The UvrABC repair system catalyzes the recognition and processing of DNA lesions. A damage recognition complex composed of 2 UvrA and 2 UvrB subunits scans DNA for abnormalities. Upon binding of the UvrA(2)B(2) complex to a putative damaged site, the DNA wraps around one UvrB monomer. DNA wrap is dependent on ATP binding by UvrB and probably causes local melting of the DNA helix, facilitating insertion of UvrB beta-hairpin between the DNA strands. Then UvrB probes one DNA strand for the presence of a lesion. If a lesion is found the UvrA subunits dissociate and the UvrB-DNA preincision complex is formed. This complex is subsequently bound by UvrC and the second UvrB is released. If no lesion is found, the DNA wraps around the other UvrB subunit that will check the other stand for damage. This Clostridium perfringens (strain SM101 / Type A) protein is UvrABC system protein B.